A 389-amino-acid polypeptide reads, in one-letter code: Lipid-A-disaccharide synthase (389 aa).

Belongs to the LpxB family.

It catalyses the reaction a lipid X + a UDP-2-N,3-O-bis[(3R)-3-hydroxyacyl]-alpha-D-glucosamine = a lipid A disaccharide + UDP + H(+). It participates in bacterial outer membrane biogenesis; LPS lipid A biosynthesis. Condensation of UDP-2,3-diacylglucosamine and 2,3-diacylglucosamine-1-phosphate to form lipid A disaccharide, a precursor of lipid A, a phosphorylated glycolipid that anchors the lipopolysaccharide to the outer membrane of the cell. In Paraburkholderia phytofirmans (strain DSM 17436 / LMG 22146 / PsJN) (Burkholderia phytofirmans), this protein is Lipid-A-disaccharide synthase.